The following is a 306-amino-acid chain: Protoheme IX farnesyltransferase (306 aa).

9 helical membrane-spanning segments follow: residues 32-52 (VVQLIVFCAFIGMVLAVPGMP), 57-77 (WALMAVASAGIWLVAGAAAAF), 108-128 (LLFSALLCAAGSALLYWWVNP), 129-149 (LTMWLTFATFVGYAVIYTVIL), 157-177 (IVIGGASGAMPPVLGWAAMTG), 183-203 (ALILFLIIFLWTPPHFWALAL), 230-250 (VFLYTLILFAGCLMPFVYGMS), 252-272 (WIYLAAAVVLSAGFCLYGFRL), and 285-305 (FRFSLIHLSLLFAALLVDHYL).

This sequence belongs to the UbiA prenyltransferase family. Protoheme IX farnesyltransferase subfamily.

The protein resides in the cell inner membrane. The enzyme catalyses heme b + (2E,6E)-farnesyl diphosphate + H2O = Fe(II)-heme o + diphosphate. It functions in the pathway porphyrin-containing compound metabolism; heme O biosynthesis; heme O from protoheme: step 1/1. Its function is as follows. Converts heme B (protoheme IX) to heme O by substitution of the vinyl group on carbon 2 of heme B porphyrin ring with a hydroxyethyl farnesyl side group. This chain is Protoheme IX farnesyltransferase, found in Acidovorax ebreus (strain TPSY) (Diaphorobacter sp. (strain TPSY)).